Consider the following 404-residue polypeptide: Cysteine desulfurase IscS (404 aa).

Pyridoxal 5'-phosphate-binding positions include 75-76 (AT), N155, Q183, and 203-205 (SGH). The residue at position 206 (K206) is an N6-(pyridoxal phosphate)lysine. T243 is a pyridoxal 5'-phosphate binding site. C328 (cysteine persulfide intermediate) is an active-site residue. C328 contacts [2Fe-2S] cluster.

It belongs to the class-V pyridoxal-phosphate-dependent aminotransferase family. NifS/IscS subfamily. In terms of assembly, homodimer. Forms a heterotetramer with IscU, interacts with other sulfur acceptors. Requires pyridoxal 5'-phosphate as cofactor.

The protein localises to the cytoplasm. It carries out the reaction (sulfur carrier)-H + L-cysteine = (sulfur carrier)-SH + L-alanine. The protein operates within cofactor biosynthesis; iron-sulfur cluster biosynthesis. Master enzyme that delivers sulfur to a number of partners involved in Fe-S cluster assembly, tRNA modification or cofactor biosynthesis. Catalyzes the removal of elemental sulfur atoms from cysteine to produce alanine. Functions as a sulfur delivery protein for Fe-S cluster synthesis onto IscU, an Fe-S scaffold assembly protein, as well as other S acceptor proteins. In Pectobacterium carotovorum subsp. carotovorum (strain PC1), this protein is Cysteine desulfurase IscS.